The primary structure comprises 126 residues: MSKVQEIIEAVKGLTVLELSELVKALEDEFGVSAAAPVAMAVAPGAAAPAEAPAEEQTEFDVILKEAGDKKINVIKVVREITALGLKEAKALVDEAPKPVKEKVSKEEAESIKAKLEEAGATVEIK.

The protein belongs to the bacterial ribosomal protein bL12 family. As to quaternary structure, homodimer. Part of the ribosomal stalk of the 50S ribosomal subunit. Forms a multimeric L10(L12)X complex, where L10 forms an elongated spine to which 2 to 4 L12 dimers bind in a sequential fashion. Binds GTP-bound translation factors.

Functionally, forms part of the ribosomal stalk which helps the ribosome interact with GTP-bound translation factors. Is thus essential for accurate translation. This chain is Large ribosomal subunit protein bL12, found in Moorella thermoacetica (strain ATCC 39073 / JCM 9320).